The following is a 249-amino-acid chain: MTQRYRVTVAYDGTDFAGFQVQPKQRTVQGTLEKALTKMSKGAYIQVYGSGRTDSGVHAMGQVVHFDYPSELPAKSMLRALNSLLPLDMEVVDSQLADDDFHARFSTVGKRYMYRVDLGHYTNPFKRRYTGHYPYPIDVERIKAALSDVMGTHDYTSFAAAGGVIKDKVRTIYEATVVYNEAENELIFEFHGNGFLYNMVRILVATLLEIGNGRRDVHDFLRLYEVKDRQQARSTAPASGLYLKEVYYK.

Catalysis depends on Asp54, which acts as the Nucleophile. A substrate-binding site is contributed by Tyr112.

This sequence belongs to the tRNA pseudouridine synthase TruA family. As to quaternary structure, homodimer.

It catalyses the reaction uridine(38/39/40) in tRNA = pseudouridine(38/39/40) in tRNA. In terms of biological role, formation of pseudouridine at positions 38, 39 and 40 in the anticodon stem and loop of transfer RNAs. The protein is tRNA pseudouridine synthase A of Latilactobacillus sakei subsp. sakei (strain 23K) (Lactobacillus sakei subsp. sakei).